Reading from the N-terminus, the 429-residue chain is Bifunctional protein GlmU (429 aa).

A pyrophosphorylase region spans residues 1–223; that stretch reads MKISVLILAA…EQDFMGVNDK (223 aa). Residues 8–11, K22, Q74, and 81–82 contribute to the UDP-N-acetyl-alpha-D-glucosamine site; these read LAAG and GT. Residue D102 participates in Mg(2+) binding. Residues G135, E149, N164, and N221 each contribute to the UDP-N-acetyl-alpha-D-glucosamine site. Position 221 (N221) interacts with Mg(2+). The tract at residues 224–244 is linker; that stretch reads IELCLAQDLMQEAIKKEWMKQ. Positions 245–429 are N-acetyltransferase; sequence GVIFHMPATT…KDYFYTKFKK (185 aa). 2 residues coordinate UDP-N-acetyl-alpha-D-glucosamine: R308 and K325. The active-site Proton acceptor is the H336. 2 residues coordinate UDP-N-acetyl-alpha-D-glucosamine: Y339 and N350. Residues 359-360, S378, A396, and R413 contribute to the acetyl-CoA site; that span reads NY.

The protein in the N-terminal section; belongs to the N-acetylglucosamine-1-phosphate uridyltransferase family. It in the C-terminal section; belongs to the transferase hexapeptide repeat family. In terms of assembly, homotrimer. Mg(2+) serves as cofactor.

It localises to the cytoplasm. It catalyses the reaction alpha-D-glucosamine 1-phosphate + acetyl-CoA = N-acetyl-alpha-D-glucosamine 1-phosphate + CoA + H(+). The enzyme catalyses N-acetyl-alpha-D-glucosamine 1-phosphate + UTP + H(+) = UDP-N-acetyl-alpha-D-glucosamine + diphosphate. The protein operates within nucleotide-sugar biosynthesis; UDP-N-acetyl-alpha-D-glucosamine biosynthesis; N-acetyl-alpha-D-glucosamine 1-phosphate from alpha-D-glucosamine 6-phosphate (route II): step 2/2. It participates in nucleotide-sugar biosynthesis; UDP-N-acetyl-alpha-D-glucosamine biosynthesis; UDP-N-acetyl-alpha-D-glucosamine from N-acetyl-alpha-D-glucosamine 1-phosphate: step 1/1. Its pathway is bacterial outer membrane biogenesis; LPS lipid A biosynthesis. Catalyzes the last two sequential reactions in the de novo biosynthetic pathway for UDP-N-acetylglucosamine (UDP-GlcNAc). The C-terminal domain catalyzes the transfer of acetyl group from acetyl coenzyme A to glucosamine-1-phosphate (GlcN-1-P) to produce N-acetylglucosamine-1-phosphate (GlcNAc-1-P), which is converted into UDP-GlcNAc by the transfer of uridine 5-monophosphate (from uridine 5-triphosphate), a reaction catalyzed by the N-terminal domain. In Campylobacter lari (strain RM2100 / D67 / ATCC BAA-1060), this protein is Bifunctional protein GlmU.